Here is a 153-residue protein sequence, read N- to C-terminus: Ribonuclease H (153 aa).

An RNase H type-1 domain is found at 4–146; sequence NNEIVEIYTD…CDRLATEQIK (143 aa). Residues Asp13, Glu51, Asp73, and Asp138 each coordinate Mg(2+).

This sequence belongs to the RNase H family. In terms of assembly, monomer. Mg(2+) is required as a cofactor.

The protein localises to the cytoplasm. The catalysed reaction is Endonucleolytic cleavage to 5'-phosphomonoester.. In terms of biological role, endonuclease that specifically degrades the RNA of RNA-DNA hybrids. The polypeptide is Ribonuclease H (Caldanaerobacter subterraneus subsp. tengcongensis (strain DSM 15242 / JCM 11007 / NBRC 100824 / MB4) (Thermoanaerobacter tengcongensis)).